The sequence spans 513 residues: Protein disulfide-isomerase (513 aa).

The first 23 residues, 1–23 (MAIRSKAWISLLLALAVALSARA), serve as a signal peptide directing secretion. One can recognise a Thioredoxin 1 domain in the interval 24-145 (EEEPAAAAEG…IVDYLKKQVG (122 aa)). Active-site nucleophile residues include Cys63 and Cys66. A disulfide bond links Cys63 and Cys66. N-linked (GlcNAc...) asparagine glycosylation is present at Asn279. The 120-residue stretch at 366 to 485 (FRNSEPIPEV…IVDFIKKSKE (120 aa)) folds into the Thioredoxin 2 domain. Catalysis depends on nucleophile residues Cys408 and Cys411. Cys408 and Cys411 form a disulfide bridge. Residues 485-513 (ETAAPHHHHHPGATGIREGSRAEPVKDEL) form a disordered region. The segment covering 502 to 513 (EGSRAEPVKDEL) has biased composition (basic and acidic residues). Positions 510 to 513 (KDEL) match the Prevents secretion from ER motif.

This sequence belongs to the protein disulfide isomerase family.

The protein resides in the endoplasmic reticulum lumen. The enzyme catalyses Catalyzes the rearrangement of -S-S- bonds in proteins.. Participates in the folding of proteins containing disulfide bonds, may be involved in glycosylation, prolyl hydroxylation and triglyceride transfer. The chain is Protein disulfide-isomerase (PDI) from Zea mays (Maize).